The primary structure comprises 195 residues: Transmembrane protein 126A (195 aa).

Over 1-33 (MENHKSNNKENITIVDISRKINQLPEAERNLLE) the chain is Mitochondrial matrix. Residues 34–54 (NGSVYVGLNAALCGLIANSLF) traverse the membrane as a helical segment. Over 55–56 (RR) the chain is Mitochondrial intermembrane. Residues 57-77 (ILNVTKARIAAGLPMAGIPFL) traverse the membrane as a helical segment. The Mitochondrial matrix portion of the chain corresponds to 78 to 110 (TTDLTYRCFVSFPLNTGDLDCETCTITRSGLTG). The chain crosses the membrane as a helical span at residues 111–131 (LVIGGLYPVFLAIPVNGGLAA). At 132-158 (RYQSALLPHKGNILSYWIRTSKPVFRK) the chain is on the mitochondrial intermembrane side. The chain crosses the membrane as a helical span at residues 159–175 (MLFPILLQTMFSAYLGS). Over 176 to 195 (EQYKLLIKALQLSEPGKEIH) the chain is Mitochondrial matrix.

This sequence belongs to the TMEM126 family. In terms of assembly, interacts with OXA1L; promoting cotranslational quality control in mitochondria. As to expression, strongly expressed in brain, cerebellum, skeletal muscle, testis. High expression also found in fetal brain, fetal retinal pigmentary epithelium, and fetal retina. Highly expressed in retinal ganglion cells.

It localises to the mitochondrion inner membrane. Its function is as follows. Protein required for the cotranslational protein quality control in the inner membrane of the mitochondria. Associates with newly synthesized polypeptides and may act as a chaperone that cooperates with OXA1L for the insertion of newly synthesized mitochondrial proteins into the inner membrane. Required for the assembly of the ND4 module of mitochondrial complex I. The polypeptide is Transmembrane protein 126A (Homo sapiens (Human)).